A 491-amino-acid chain; its full sequence is Lysine--tRNA ligase 1 (491 aa).

Glu400 and Glu407 together coordinate Mg(2+).

Belongs to the class-II aminoacyl-tRNA synthetase family. Homodimer. Requires Mg(2+) as cofactor.

The protein localises to the cytoplasm. The catalysed reaction is tRNA(Lys) + L-lysine + ATP = L-lysyl-tRNA(Lys) + AMP + diphosphate. The polypeptide is Lysine--tRNA ligase 1 (Mycoplasmopsis pulmonis (strain UAB CTIP) (Mycoplasma pulmonis)).